Here is a 425-residue protein sequence, read N- to C-terminus: UPF0761 membrane protein PXO_04555 (425 aa).

The next 6 helical transmembrane spans lie at 48–68 (VFAL…FPAF), 105–125 (FTVA…HSIE), 154–174 (GTML…LPLF), 182–202 (LAEF…IVLI), 219–239 (GALL…VYLG), and 250–270 (ALSA…SVLL).

It belongs to the UPF0761 family.

It is found in the cell inner membrane. This is UPF0761 membrane protein PXO_04555 from Xanthomonas oryzae pv. oryzae (strain PXO99A).